Reading from the N-terminus, the 555-residue chain is Formate--tetrahydrofolate ligase (555 aa).

Residue T65–S72 participates in ATP binding.

Belongs to the formate--tetrahydrofolate ligase family.

It carries out the reaction (6S)-5,6,7,8-tetrahydrofolate + formate + ATP = (6R)-10-formyltetrahydrofolate + ADP + phosphate. Its pathway is one-carbon metabolism; tetrahydrofolate interconversion. The chain is Formate--tetrahydrofolate ligase from Staphylococcus carnosus (strain TM300).